We begin with the raw amino-acid sequence, 121 residues long: Small ribosomal subunit protein uS13 (121 aa).

Residues 91-121 (HRRGLPVRGQNTKNNARTRKGPSKTVAGKKK) are disordered. Basic residues predominate over residues 106–121 (ARTRKGPSKTVAGKKK).

Belongs to the universal ribosomal protein uS13 family. In terms of assembly, part of the 30S ribosomal subunit. Forms a loose heterodimer with protein S19. Forms two bridges to the 50S subunit in the 70S ribosome.

Its function is as follows. Located at the top of the head of the 30S subunit, it contacts several helices of the 16S rRNA. In the 70S ribosome it contacts the 23S rRNA (bridge B1a) and protein L5 of the 50S subunit (bridge B1b), connecting the 2 subunits; these bridges are implicated in subunit movement. Contacts the tRNAs in the A and P-sites. This chain is Small ribosomal subunit protein uS13, found in Listeria welshimeri serovar 6b (strain ATCC 35897 / DSM 20650 / CCUG 15529 / CIP 8149 / NCTC 11857 / SLCC 5334 / V8).